We begin with the raw amino-acid sequence, 407 residues long: MNRLYVGSEVGQLRRVLLNRPERALTHLTPSNCHELLFDDVLAVEAAGVEHDAFANTLRTQDVEVLLLHDLLEETLAIPEARQWLLNTQISDFRFGPTFARELRHALNHLDDHHLTTLLLGGLAFSELHLESDSMLPKMRQPLDFVIEPLPNHLFTRDTSCWVYGGVSLNPMMKPARQRETNHLRAIYRWHPIFAQHPFIHYFGIDDLHYDNANIEGGDVLVIGKGAVLIGMSERTSPQGVENLAAALFKHGQASKVIAINLPKHRSCMHLDTVMTHMDVDTFSVYPEVMRKDLPTWRLTPKGNNGDMRVEQVPSYLHAIEQALGVDYLKIITTGGNSYEAEREQWNDANNVLTVKPGVVIGYERNVYTNEKYDKAGIKVLTIPGNELGRGRGGARCMSCPIERDGI.

Residue Cys397 is the Amidino-cysteine intermediate of the active site.

This sequence belongs to the arginine deiminase family.

It is found in the cytoplasm. It carries out the reaction L-arginine + H2O = L-citrulline + NH4(+). It participates in amino-acid degradation; L-arginine degradation via ADI pathway; carbamoyl phosphate from L-arginine: step 1/2. In Vibrio cholerae serotype O1 (strain ATCC 39541 / Classical Ogawa 395 / O395), this protein is Arginine deiminase.